The sequence spans 457 residues: Argininosuccinate lyase (457 aa).

Belongs to the lyase 1 family. Argininosuccinate lyase subfamily.

It localises to the cytoplasm. It catalyses the reaction 2-(N(omega)-L-arginino)succinate = fumarate + L-arginine. It participates in amino-acid biosynthesis; L-arginine biosynthesis; L-arginine from L-ornithine and carbamoyl phosphate: step 3/3. This chain is Argininosuccinate lyase, found in Yersinia pseudotuberculosis serotype IB (strain PB1/+).